The primary structure comprises 374 residues: Histidinol-phosphate aminotransferase (374 aa).

K211 is modified (N6-(pyridoxal phosphate)lysine). A compositionally biased stretch (low complexity) spans 351 to 368; sequence GNSSQDSASKSNSSANND. Residues 351-374 are disordered; it reads GNSSQDSASKSNSSANNDELNASN.

The protein belongs to the class-II pyridoxal-phosphate-dependent aminotransferase family. Histidinol-phosphate aminotransferase subfamily. As to quaternary structure, homodimer. Requires pyridoxal 5'-phosphate as cofactor.

It carries out the reaction L-histidinol phosphate + 2-oxoglutarate = 3-(imidazol-4-yl)-2-oxopropyl phosphate + L-glutamate. Its pathway is amino-acid biosynthesis; L-histidine biosynthesis; L-histidine from 5-phospho-alpha-D-ribose 1-diphosphate: step 7/9. The chain is Histidinol-phosphate aminotransferase from Photobacterium profundum (strain SS9).